The sequence spans 638 residues: Dihydrolipoyllysine-residue acetyltransferase component of pyruvate dehydrogenase complex (638 aa).

2 consecutive Lipoyl-binding domains span residues 2–74 (SEII…IELE) and 117–191 (SQEV…LTLR). K40 is modified (N6-lipoyllysine). Low complexity predominate over residues 90–117 (PAAPTQAVDEAEAPSPGASATPAPAAAS). The disordered stretch occupies residues 90–119 (PAAPTQAVDEAEAPSPGASATPAPAAASQE). Residue K157 is modified to N6-lipoyllysine. Residues 201-220 (APAAAAAASPAPAPLAPAAA) are disordered. The Lipoyl-binding 3 domain maps to 222 to 296 (PQEVKVPDIG…GTGDQILTLR (75 aa)). K262 is subject to N6-lipoyllysine. The span at 301-320 (APSGPRARGSPGQAAAAPGA) shows a compositional bias: low complexity. The tract at residues 301-336 (APSGPRARGSPGQAAAAPGAAPAPAPVGAPSRNGAK) is disordered. The Peripheral subunit-binding (PSBD) domain maps to 338–375 (HAGPAVRQLAREFGVELAAINSTGPRGRILKEDVQAYV). The catalytic stretch occupies residues 382–638 (AKEAPAAGAA…LLADIRAILL (257 aa)). H611 is a catalytic residue.

Belongs to the 2-oxoacid dehydrogenase family. Forms a 24-polypeptide structural core with octahedral symmetry. (R)-lipoate is required as a cofactor.

The enzyme catalyses N(6)-[(R)-dihydrolipoyl]-L-lysyl-[protein] + acetyl-CoA = N(6)-[(R)-S(8)-acetyldihydrolipoyl]-L-lysyl-[protein] + CoA. The pyruvate dehydrogenase complex catalyzes the overall conversion of pyruvate to acetyl-CoA and CO(2). It contains multiple copies of three enzymatic components: pyruvate dehydrogenase (E1), dihydrolipoamide acetyltransferase (E2) and lipoamide dehydrogenase (E3). The polypeptide is Dihydrolipoyllysine-residue acetyltransferase component of pyruvate dehydrogenase complex (Azotobacter vinelandii).